We begin with the raw amino-acid sequence, 529 residues long: MARPPAATAPPPPPPPPPPPPPPIDRLVWLACAAPLSRIPVVGTQVSYFPEGHAEQCPAPLPDPLPSAHRFFLCTITAVDLSADTTTGEPYATISLLPLRHDAPAPAPAPAPAAAELAEAESQEFRYYAKQLTQSDANNGGGFSVPRLCADHIFPALNLDDDPPVQSLTMGDLQGDSWEFRHIYRGTPRRHLLTTGWSKFVNAKQLVAGDTVVFMWCGAPAPERKLLVGVRRAARYSGESACNARGRVQPQEVMEAVRLAAEQAAFRVTYYPRHGAGEFVVPRVEVDKGLTTPWRCGMQVRAQVMEAEDTRRLAWLNGTLTNLRHQQIWRTLEVEWDASAASSSMKNRFVNPWQVQPVDFPPLPMGLKISNNNISAPVCNGDSLLVPPILMHPQPQPPADIQGARHNNGHAYADIPSSSTPSMVRTQQLFPRDLQILVPHTDIVTPQNGSPPDNPVNTPLSASDGMKTIQLFGVTITSPVQGDTNGAFASAQVNQVPEGVDDETATEEASDTSLPDSLTNGHNQDGARL.

The tract at residues M1–P22 is disordered. Residues A7–P22 show a composition bias toward pro residues. The TF-B3 DNA-binding region spans Y128–A234. Disordered regions lie at residues I443 to A462 and P497 to L529. A compositionally biased stretch (polar residues) spans V444–S461. Positions G499–S510 are enriched in acidic residues. Residues D511–N523 show a composition bias toward polar residues.

The protein belongs to the ARF family. As to quaternary structure, homo and heterodimers. Expressed in roots, culms, leaves and young panicles.

The protein localises to the nucleus. Its function is as follows. Auxin response factors (ARFs) are transcriptional factors that bind specifically to the DNA sequence 5'-TGTCTC-3' found in the auxin-responsive promoter elements (AuxREs). The protein is Auxin response factor 13 (ARF13) of Oryza sativa subsp. japonica (Rice).